The chain runs to 262 residues: Trypsin theta (262 aa).

Residues 1-19 form the signal peptide; it reads MHRLVVLLVCLAVGSACAG. A propeptide spans 20–34 (activation peptide); the sequence is TVGVSNGDPFEREGR. Residues 35–260 form the Peptidase S1 domain; that stretch reads IVGGEDTTIG…LRKWILNASE (226 aa). A disulfide bridge links cysteine 61 with cysteine 77. Residues histidine 76 and aspartate 121 each act as charge relay system in the active site. 2 cysteine pairs are disulfide-bonded: cysteine 186-cysteine 203 and cysteine 212-cysteine 236. Serine 216 serves as the catalytic Charge relay system.

The protein belongs to the peptidase S1 family.

It localises to the secreted. The protein localises to the extracellular space. The enzyme catalyses Preferential cleavage: Arg-|-Xaa, Lys-|-Xaa.. The sequence is that of Trypsin theta (thetaTry) from Drosophila melanogaster (Fruit fly).